Reading from the N-terminus, the 198-residue chain is 5'-deoxynucleotidase ETA_12010 (198 aa).

Substrate-binding positions include 18-19 and histidine 33; that span reads RW. The HD domain maps to 30-142; that stretch reads VSEHSLQVAM…VKQADALCAY (113 aa). A divalent metal cation is bound by residues histidine 33, histidine 68, and aspartate 69. Substrate is bound by residues aspartate 69, 77–80, and aspartate 137; that span reads DLPT. A divalent metal cation is bound at residue aspartate 137.

This sequence belongs to the 5DNU family. As to quaternary structure, homodimer. A divalent metal cation serves as cofactor.

The protein localises to the cytoplasm. The enzyme catalyses a 2'-deoxyribonucleoside 5'-phosphate + H2O = a 2'-deoxyribonucleoside + phosphate. Functionally, catalyzes the strictly specific dephosphorylation of 2'-deoxyribonucleoside 5'-monophosphates. This Erwinia tasmaniensis (strain DSM 17950 / CFBP 7177 / CIP 109463 / NCPPB 4357 / Et1/99) protein is 5'-deoxynucleotidase ETA_12010.